Consider the following 177-residue polypeptide: Deoxyuridine 5'-triphosphate nucleotidohydrolase (177 aa).

Substrate is bound by residues 83–85, Asn-96, 100–102, and Lys-110; these read RSG and TID. The segment covering 150–163 has biased composition (polar residues); sequence DLTSSQTDLSNQPN. The tract at residues 150-177 is disordered; it reads DLTSSQTDLSNQPNTGRGTGGFGSTGQK. A compositionally biased stretch (gly residues) spans 166 to 177; the sequence is RGTGGFGSTGQK.

Belongs to the dUTPase family. Mg(2+) is required as a cofactor.

The enzyme catalyses dUTP + H2O = dUMP + diphosphate + H(+). It functions in the pathway pyrimidine metabolism; dUMP biosynthesis; dUMP from dCTP (dUTP route): step 2/2. Its function is as follows. This enzyme is involved in nucleotide metabolism: it produces dUMP, the immediate precursor of thymidine nucleotides and it decreases the intracellular concentration of dUTP so that uracil cannot be incorporated into DNA. In Bartonella bacilliformis (strain ATCC 35685 / KC583 / Herrer 020/F12,63), this protein is Deoxyuridine 5'-triphosphate nucleotidohydrolase.